A 199-amino-acid polypeptide reads, in one-letter code: MVKIGVCGPVGSGKTALIEALTRHMSKDYDMAVITNDIYTKEDAEFMCKNSVMPRERIIGVETGGCPHTAIREDASMNLEAVEEMHDRFPNLELLLIESGGDNLSATFNPELADFTIFVIDVAEGDKIPRKGGPGITRSDLLVINKIDLAPYVGADLKVMERDSKKMRGEKPFIFTNIRAKEGLDDVIAWIKRNALLED.

8–15 contacts GTP; it reads GPVGSGKT.

The protein belongs to the SIMIBI class G3E GTPase family. UreG subfamily. Homodimer. UreH, UreF and UreG form a complex that acts as a GTP-hydrolysis-dependent molecular chaperone, activating the urease apoprotein by helping to assemble the nickel containing metallocenter of UreC. The UreE protein probably delivers the nickel.

Its subcellular location is the cytoplasm. In terms of biological role, facilitates the functional incorporation of the urease nickel metallocenter. This process requires GTP hydrolysis, probably effectuated by UreG. In Helicobacter pylori (strain P12), this protein is Urease accessory protein UreG.